Here is a 599-residue protein sequence, read N- to C-terminus: uncharacterized protein (599 aa).

Over residues 1 to 13 the composition is skewed to low complexity; that stretch reads MSSSSSHNSFSGS. 2 disordered regions span residues 1-27 and 41-86; these read MSSS…IDGL and YPSN…DDTN. Residues 14–27 are compositionally biased toward polar residues; the sequence is KTNAAEGQNSIDGL. Positions 44-70 are enriched in basic and acidic residues; sequence NEEKEVKETDIVPDENKVNELDVHKQS. The next 14 helical transmembrane spans lie at 97 to 117, 135 to 155, 162 to 182, 192 to 212, 223 to 243, 251 to 271, 290 to 310, 321 to 341, 359 to 379, 396 to 416, 423 to 443, 452 to 472, 489 to 509, and 552 to 572; these read IVVP…TIVT, WIGS…GVFC, IVLY…GASQ, AIQG…ISDI, GILA…GGAI, WIFF…VVFL, FIGL…ISLG, ILCY…YDTF, AALL…AYYV, VHTI…GMVL, LPLI…MICV, VMGL…PPLI, TLMF…EVIF, and VIWI…FFIK.

The protein belongs to the major facilitator superfamily. TCR/Tet family.

The protein localises to the membrane. This is an uncharacterized protein from Schizosaccharomyces pombe (strain 972 / ATCC 24843) (Fission yeast).